Reading from the N-terminus, the 368-residue chain is 2-deoxy-scyllo-inosose synthase (368 aa).

Residues Asp42, 72–75, 104–108, 128–129, 139–141, 150–151, and Gln176 each bind NAD(+); these read EEYK, GLTGN, TT, SIK, and KN. Lys141 is an active-site residue. Position 183 (Glu183) interacts with Co(2+). The active site involves Glu243. Positions 246 and 262 each coordinate Co(2+).

This sequence belongs to the sugar phosphate cyclases superfamily. DOI synthase family. In terms of assembly, was isolated as a heterodimeric enzyme comprising of BtrC and a smaller polypeptide further identified as PdxT by sequence homology. Homodimer in solution. NAD(+) is required as a cofactor. Requires Co(2+) as cofactor.

The catalysed reaction is D-glucose 6-phosphate = 2-deoxy-L-scyllo-inosose + phosphate. It functions in the pathway metabolic intermediate biosynthesis; 2-deoxystreptamine biosynthesis; 2-deoxystreptamine from D-glucose 6-phosphate: step 1/4. The protein operates within antibiotic biosynthesis; butirosin biosynthesis. Its activity is regulated as follows. Strongly inhibited by EDTA, zinc and Cu(2+). Functionally, catalyzes the intramolecular carbocycle formation from D-glucose-6-phosphate to 2-deoxy-scyllo-inosose (DOI). The protein is 2-deoxy-scyllo-inosose synthase (btrC) of Niallia circulans (Bacillus circulans).